The primary structure comprises 1699 residues: Genome polyprotein (1699 aa).

Positions 1–19 are enriched in low complexity; the sequence is MKMASNDASAAAVVNSNND. The segment at 1-78 is disordered; the sequence is MKMASNDASA…PPPPPNGEDE (78 aa). Residues 1–116 are interaction with host MAP1LC3A/LC3; that stretch reads MKMASNDASA…AFSVPPLNQR (116 aa). The span at 46–74 shows a compositional bias: pro residues; the sequence is QPPPRETPQRPPRPPTPELVKKIPPPPPN. The tract at residues 117–330 is interaction with NTPase; sequence ENRDAKEPLT…APLLGDYELQ (214 aa). The interval 233 to 330 is interaction with NS4; sequence RPYQDWNRKP…APLLGDYELQ (98 aa). Host ER membrane association stretches follow at residues 250 to 281 and 292 to 330; these read KLKK…RPLN and TFAG…YELQ. The segment at 331 to 509 is interaction with NS1-2, NS4 and homooligomerization; the sequence is GPEDLAVELV…GKTHLARELA (179 aa). Residues 465–632 enclose the SF3 helicase domain; it reads LARIAAARSL…EKAKRDFPGQ (168 aa). ATP is bound at residue 495–502; it reads GKPGIGKT. An important for mitochondrion targeting region spans residues 586-691; that stretch reads AIIITTNLAN…ASGLLHERLD (106 aa). The functions as endoplasmic reticulum export signal stretch occupies residues 764–770; sequence YTLESDG. Positions 801-850 are host membrane association; it reads RIRYYVKCVQEALYSIIQIAGAAFVTTRIVKRMNIQDLWSKPQVEDTEDT. The disordered stretch occupies residues 843–894; that stretch reads QVEDTEDTANKDGCPKPKDDEEFVVSSDDIKTEGKKGKNKTGRGKKHTAFSS. The span at 850–861 shows a compositional bias: basic and acidic residues; sequence TANKDGCPKPKD. The span at 879–890 shows a compositional bias: basic residues; that stretch reads GKNKTGRGKKHT. The segment at 899–904 is acidic; sequence DEEYDE. The residue at position 902 (Y902) is an O-(5'-phospho-RNA)-tyrosine. The interaction with host EIF4G stretch occupies residues 992-1008; the sequence is WADDDRSVDYNEKLDFE. Residues 1009-1189 form the Peptidase C37 domain; it reads APPSIWSRIV…QGSEGEATLE (181 aa). Active-site for 3CLpro activity residues include H1038, E1062, and C1147. Positions 1425–1546 constitute a RdRp catalytic domain; sequence KYHYDADYSR…STDINLNPEK (122 aa). Mg(2+)-binding residues include D1429, D1431, D1533, and E1534.

As to quaternary structure, homodimer. Homooligomer. Interacts with NTPase; this interaction increases the proapoptotic activity of the NTPase and is crucial for the formation of the viral replication complex. Interacts with NS4; this interaction is crucial for the formation of the viral replication complex. Interacts (via N-terminus) with host VAPA. Interacts with host MAP1LC3A/LC3; this interaction does not seem to be linked to host autophagy, but rather plays a role in the formation of viral factories. In terms of assembly, homooligomer. Interacts with NS1-2; this interaction increases the proapoptotic activity of the NTPase and is crucial for the formation of the viral replication complex. Interacts with NS4; this interaction increases the proapoptotic activity of the NTPase. Homodimer. Monomer; in solution. As to quaternary structure, interacts with NTPase; this interaction increases the proapoptotic activity of the NTPase. Interacts with NS1-2; this interaction is crucial for the formation of the viral replication complex. In terms of assembly, monomer. Interacts with the RNA-directed RNA polymerase; this interaction induces the multimerization of the RdRp and enhances its activity. Interacts with host IEF4G1; this interaction plays a role in translation of viral proteins. Homohexamer; also forms fibrous hexameric oligomer. Interacts with the viral genome-linked protein; this interaction induces the multimerization of the RdRp and enhances its activity. Mg(2+) serves as cofactor. It depends on Mn(2+) as a cofactor. Specific enzymatic cleavages in vivo yield mature proteins. 3CLpro is first autocatalytically cleaved, then processes the whole polyprotein. NS1/2-3 and NS3-4 sites are cleaved rapidly and NS4-5, NS5-6, and NS6-7 sites are processed subsequently and less efficiently. In terms of processing, VPg is uridylylated by the polymerase and is covalently attached to the 5'-end of the polyadenylated genomic and subgenomic RNAs. This uridylylated form acts as a nucleotide-peptide primer for the polymerase. Post-translationally, cleaved by host CASP3/caspase 3 at 18-22 h.p.i. The cleavage allows NS1 secretion, which is essential for intestinal infection and resistance to IFN-lambda.

The protein resides in the host endoplasmic reticulum membrane. The protein localises to the secreted. It localises to the host mitochondrion. Its subcellular location is the host Golgi apparatus membrane. It is found in the host cytoplasm. The protein resides in the host perinuclear region. It catalyses the reaction a ribonucleoside 5'-triphosphate + H2O = a ribonucleoside 5'-diphosphate + phosphate + H(+). It carries out the reaction Endopeptidase with a preference for cleavage when the P1 position is occupied by Glu-|-Xaa and the P1' position is occupied by Gly-|-Yaa.. The enzyme catalyses RNA(n) + a ribonucleoside 5'-triphosphate = RNA(n+1) + diphosphate. In terms of biological role, induces the proliferation of the host smooth ER membranes forming long tubular structures. These remodeled membranes probably form the viral factories that contain the replication complex. May play a role in viral replication by interacting with host VAPA, a vesicle-associated membrane protein that plays a role in SNARE-mediated vesicle fusion. This interaction may target replication complex to intracellular membranes. Functionally, displays NTPase activity, but no helicase activity. Displays RNA chaperone-like activity and destabilizes dsRNA. Induces the formation of convoluted membranes derived from the host ER. These remodeled membranes probably form the viral factories that contain the replication complex. Initiates host cell death by targeting the mitochondrial outer membrane, leading to the permeabilization of mitochondria, programmed host cell death and viral egress. Externalization of host cardiolipin seems to be involved in the process. Probably plays a role in preventing the assembly of host stress granules. Its function is as follows. Probable key protein responsible for the formation of membrane alterations by the virus. Induces the formation of convoluted membranes derived from the host ER. These remodeled membranes probably form the viral factories that contain the replication complex. May play a role in targeting replication complex to intracellular membranes. Viral genome-linked protein is covalently linked to the 5'-end of the positive-strand, negative-strand genomic RNAs and subgenomic RNA. Acts as a genome-linked replication primer. May recruit ribosome to viral RNA thereby promoting viral proteins translation. Interacts with host translation initiation complex to allow the translation of viral proteins. Induces the formation of aggregates of RNA-directed RNA polymerase in the presence of RNA. Through its interaction with the viral RNA-directed RNA polymerase, plays a crucial role in enhancing the polymerase activity. In terms of biological role, processes the polyprotein. 3CLpro-RdRp is first released by autocleavage, then all other proteins are cleaved. May cleave polyadenylate-binding protein thereby inhibiting cellular translation. Functionally, replicates genomic and antigenomic RNA by recognizing replications specific signals. Also transcribes a subgenomic mRNA by initiating RNA synthesis internally on antigenomic RNA. This sgRNA codes for structural proteins. Catalyzes the covalent attachment VPg with viral RNAs. The chain is Genome polyprotein from Lordsdale virus (strain GII/Human/United Kingdom/Lordsdale/1993) (Human enteric calicivirus).